The chain runs to 975 residues: Lateral signaling target protein 2 homolog (975 aa).

Disordered regions lie at residues 299–458 and 504–523; these read PLGS…GTDE and YGTA…PSTS. 4 stretches are compositionally biased toward low complexity: residues 302 to 352, 365 to 376, 383 to 400, and 408 to 429; these read SSSI…TTNT, NNHNSNSNSSSN, TLRS…TPTA, and PSHS…PADW. Acidic residues predominate over residues 430–458; that stretch reads SDGDDEDEDDDDIDVDEEDPESSDDGTDE. Phosphoserine is present on residues S540 and S541. 2 disordered regions span residues 556-633 and 740-891; these read EEHM…SSLS and DNVF…SPPA. Residues 564–602 show a composition bias toward basic residues; sequence GRHHRHHQSHHHHHHHRHSHQHQHRQPHPHRTTRSGRKR. Residues 621 to 633 show a composition bias toward low complexity; that stretch reads LASGDTSAASSLS. Residues 751–770 are compositionally biased toward polar residues; it reads ATGQRHSAGASMQRNNTIDL. S796 carries the phosphoserine modification. Low complexity-rich tracts occupy residues 802–860 and 877–890; these read AASS…PVSA and PSSA…LSPP. The segment at 895 to 955 adopts an FYVE-type zinc-finger fold; the sequence is DGKAPRCMAC…VCRDCYVREV (61 aa). Residues C901, C904, C917, C920, C925, C928, C947, and C950 each coordinate Zn(2+).

Belongs to the lst-2 family.

Its function is as follows. Negative regulator of epidermal growth factor receptor (EGFR) signaling. The chain is Lateral signaling target protein 2 homolog from Drosophila sechellia (Fruit fly).